Consider the following 308-residue polypeptide: MKELSVDHLLGIKYINENDINLIFETADHFKEVINRPIKKVPSLRDITIANIFFENSTRTKLSFELAQKRLSADVISFSAAQSSVKKGETLIDTVNNILSMKVDMVVMRHSNPGAAYFLSKNVKASIVNAGDGAHEHPTQALLDSYSIREKLGDVAGKKVVIVGDILHSRVALSNIYALQMQGAEVKVCGPKTLIPRYIESLGVTVEPNLRKALEWCDVANMLRVQNERMDVNFFPSTREYAQQYGVDKPLLDSLNKEIVIMHPGPINRGVEITSEVADSDHSVILNQVENGVAIRMAVIYLLASKIQ.

R59 and T60 together coordinate carbamoyl phosphate. K87 provides a ligand contact to L-aspartate. Residues R109, H137, and Q140 each coordinate carbamoyl phosphate. L-aspartate is bound by residues R170 and R224. Carbamoyl phosphate contacts are provided by G265 and P266.

Belongs to the aspartate/ornithine carbamoyltransferase superfamily. ATCase family. Heterododecamer (2C3:3R2) of six catalytic PyrB chains organized as two trimers (C3), and six regulatory PyrI chains organized as three dimers (R2).

The enzyme catalyses carbamoyl phosphate + L-aspartate = N-carbamoyl-L-aspartate + phosphate + H(+). It functions in the pathway pyrimidine metabolism; UMP biosynthesis via de novo pathway; (S)-dihydroorotate from bicarbonate: step 2/3. In terms of biological role, catalyzes the condensation of carbamoyl phosphate and aspartate to form carbamoyl aspartate and inorganic phosphate, the committed step in the de novo pyrimidine nucleotide biosynthesis pathway. This chain is Aspartate carbamoyltransferase catalytic subunit, found in Flavobacterium johnsoniae (strain ATCC 17061 / DSM 2064 / JCM 8514 / BCRC 14874 / CCUG 350202 / NBRC 14942 / NCIMB 11054 / UW101) (Cytophaga johnsonae).